The chain runs to 234 residues: Large ribosomal subunit protein uL1 (234 aa).

It belongs to the universal ribosomal protein uL1 family. As to quaternary structure, part of the 50S ribosomal subunit.

In terms of biological role, binds directly to 23S rRNA. The L1 stalk is quite mobile in the ribosome, and is involved in E site tRNA release. Its function is as follows. Protein L1 is also a translational repressor protein, it controls the translation of the L11 operon by binding to its mRNA. This chain is Large ribosomal subunit protein uL1, found in Baumannia cicadellinicola subsp. Homalodisca coagulata.